The following is a 244-amino-acid chain: Kallikrein-6 (244 aa).

Residues 1-16 (MKKLMVVLSLIAAAWA) form the signal peptide. A propeptide spans 17–21 (EEQNK) (activation peptide). One can recognise a Peptidase S1 domain in the interval 22 to 242 (LVHGGPCDKT…YTNWIQKTIQ (221 aa)). Disulfide bonds link Cys28-Cys157, Cys47-Cys63, Cys131-Cys231, Cys138-Cys203, Cys168-Cys182, and Cys193-Cys218. Residues His62 and Asp106 each act as charge relay system in the active site. N-linked (GlcNAc...) asparagine glycosylation occurs at Asn134. Ser197 serves as the catalytic Charge relay system.

In terms of processing, inactivated by autolytic cleavage after Arg-80. As to expression, in fluids, highest levels found in milk of lactating women followed by cerebrospinal fluid, nipple aspirate fluid and breast cyst fluid. Also found in serum, seminal plasma and some amniotic fluids and breast tumor cytosolic extracts. Not detected in urine. At the tissue level, highest concentrations found in glandular tissues such as salivary glands followed by lung, colon, fallopian tube, placenta, breast, pituitary and kidney. Not detected in skin, spleen, bone, thyroid, heart, ureter, liver, muscle, endometrium, testis, pancreas, seminal vesicle, ovary, adrenals and prostate. In brain, detected in gray matter neurons (at protein level). Colocalizes with pathological inclusions such as Lewy bodies and glial cytoplasmic inclusions. Overexpressed in primary breast tumors but not expressed in metastatic tumors.

The protein resides in the secreted. The protein localises to the nucleus. It localises to the nucleolus. Its subcellular location is the cytoplasm. It is found in the mitochondrion. The protein resides in the microsome. Its activity is regulated as follows. Inhibited by a range of serine protease inhibitors including soybean trypsin inhibitor, benzamidine and serpins. Activated by a range of glycosaminoglycans including chondroitin sulfate, dermatan sulfate, heparan sulfate and heparin. Its function is as follows. Serine protease which exhibits a preference for Arg over Lys in the substrate P1 position and for Ser or Pro in the P2 position. Shows activity against amyloid precursor protein, myelin basic protein, gelatin, casein and extracellular matrix proteins such as fibronectin, laminin, vitronectin and collagen. Degrades alpha-synuclein and prevents its polymerization, indicating that it may be involved in the pathogenesis of Parkinson disease and other synucleinopathies. May be involved in regulation of axon outgrowth following spinal cord injury. Tumor cells treated with a neutralizing KLK6 antibody migrate less than control cells, suggesting a role in invasion and metastasis. In Homo sapiens (Human), this protein is Kallikrein-6 (KLK6).